A 115-amino-acid polypeptide reads, in one-letter code: NADH-ubiquinone oxidoreductase chain 3 (115 aa).

The next 3 helical transmembrane spans lie at 3–23 (IMIT…IAFW), 55–75 (FFLV…LLPL), and 87–107 (MLTT…YEWL).

This sequence belongs to the complex I subunit 3 family. As to quaternary structure, core subunit of respiratory chain NADH dehydrogenase (Complex I) which is composed of 45 different subunits. Interacts with TMEM186. Interacts with TMEM242.

The protein resides in the mitochondrion inner membrane. It catalyses the reaction a ubiquinone + NADH + 5 H(+)(in) = a ubiquinol + NAD(+) + 4 H(+)(out). Functionally, core subunit of the mitochondrial membrane respiratory chain NADH dehydrogenase (Complex I) which catalyzes electron transfer from NADH through the respiratory chain, using ubiquinone as an electron acceptor. Essential for the catalytic activity of complex I. The chain is NADH-ubiquinone oxidoreductase chain 3 from Dasypus novemcinctus (Nine-banded armadillo).